The sequence spans 245 residues: MKHVGSYEELASFTSVKGNLGFDTVFEAVFMIFGPRLNIAQRYVDLLANTGIERGLLGPHEANRLWDRHLLNSAVVAELLDPGDRVVDIGSGAGLPGLPLAIARPDLQVVLLEPLLRRVTFLREVVAELGLDVEVVRGRAEELWVRDRIGERDVAVSRAVAALDKLTKWSIPLLRPGGQILAIKGEHVFDEIHQHRRVMASLGAVDVMVVVCGANYLCRPVTVVLTRCGQQMRHKPARVGDRKTQ.

S-adenosyl-L-methionine contacts are provided by residues Gly90, Leu95, 140-141 (AE), and Arg158.

The protein belongs to the methyltransferase superfamily. RNA methyltransferase RsmG family.

It is found in the cytoplasm. In terms of biological role, specifically methylates the N7 position of guanine in position 518 of 16S rRNA. This is Ribosomal RNA small subunit methyltransferase G from Mycobacterium leprae (strain TN).